Consider the following 79-residue polypeptide: Sulfur carrier protein TusA (79 aa).

Residue cysteine 17 is the Cysteine persulfide intermediate of the active site.

It belongs to the sulfur carrier protein TusA family.

It is found in the cytoplasm. Functionally, sulfur carrier protein which probably makes part of a sulfur-relay system. The polypeptide is Sulfur carrier protein TusA (Haemophilus influenzae (strain 86-028NP)).